We begin with the raw amino-acid sequence, 248 residues long: Tetrachloro-P-hydroquinone reductive dehalogenase (248 aa).

The GST N-terminal domain occupies 2–84 (PEVSLYNYTM…EAAKLGKVGI (83 aa)). One can recognise a GST C-terminal domain in the interval 133–248 (YAEKYPELRS…RVMPNWKGGI (116 aa)).

Belongs to the GST superfamily. In terms of assembly, homodimer.

The catalysed reaction is 2,6-dichlorohydroquinone + glutathione disulfide + chloride + H(+) = 2,3,6-trichlorohydroquinone + 2 glutathione. It carries out the reaction 2,3,6-trichlorohydroquinone + glutathione disulfide + chloride = 2,3,5,6-tetrachlorohydroquinone + 2 glutathione. The protein operates within xenobiotic degradation; pentachlorophenol degradation. Its function is as follows. Sequential reduction of tetrachloro-p-hydroquinone to monochlorophenol, using glutathione as the reducing agent. The polypeptide is Tetrachloro-P-hydroquinone reductive dehalogenase (pcpC) (Sphingobium chlorophenolicum).